The primary structure comprises 126 residues: Glycine cleavage system H protein (126 aa).

One can recognise a Lipoyl-binding domain in the interval 22-104 (VAYVGITDYA…YGEGWLIKMK (83 aa)). An N6-lipoyllysine modification is found at lysine 63.

The protein belongs to the GcvH family. As to quaternary structure, the glycine cleavage system is composed of four proteins: P, T, L and H. (R)-lipoate is required as a cofactor.

Its function is as follows. The glycine cleavage system catalyzes the degradation of glycine. The H protein shuttles the methylamine group of glycine from the P protein to the T protein. The chain is Glycine cleavage system H protein from Bacteroides fragilis (strain YCH46).